We begin with the raw amino-acid sequence, 212 residues long: Ras-related protein Rab-17 (212 aa).

Serine 29 is modified (phosphoserine). GTP is bound by residues glycine 31, lysine 32, serine 33, and threonine 50. Positions 33, 50, and 73 each coordinate Mg(2+). Positions 43–54 match the Switch 1 motif; that stretch reads DFKSILPTVGCA. The short motif at 75 to 91 is the Switch 2 element; it reads AGQEKYHSVCHLYFRGA. GTP contacts are provided by glycine 76, asparagine 132, lysine 133, aspartate 135, and alanine 163. Residues cysteine 209 and cysteine 210 are each lipidated (S-geranylgeranyl cysteine).

The protein belongs to the small GTPase superfamily. Rab family. It depends on Mg(2+) as a cofactor. In terms of tissue distribution, expressed in melanocytes (at protein level).

It localises to the recycling endosome membrane. The protein resides in the melanosome. The protein localises to the cell projection. It is found in the dendrite. The enzyme catalyses GTP + H2O = GDP + phosphate + H(+). With respect to regulation, regulated by guanine nucleotide exchange factors (GEFs) which promote the exchange of bound GDP for free GTP. Regulated by GTPase activating proteins (GAPs) which increase the GTP hydrolysis activity. Inhibited by GDP dissociation inhibitors (GDIs). Its function is as follows. The small GTPases Rab are key regulators of intracellular membrane trafficking, from the formation of transport vesicles to their fusion with membranes. Rabs cycle between an inactive GDP-bound form and an active GTP-bound form that is able to recruit to membranes different set of downstream effectors directly responsible for vesicle formation, movement, tethering and fusion. RAB17 is involved in transcytosis, the directed movement of endocytosed material through the cell and its exocytosis from the plasma membrane at the opposite side. Mainly observed in epithelial cells, transcytosis mediates for instance, the transcellular transport of immunoglobulins from the basolateral surface to the apical surface. Most probably controls membrane trafficking through apical recycling endosomes in a post-endocytic step of transcytosis. Required for melanosome transport and release from melanocytes, it also regulates dendrite and dendritic spine development. May also play a role in cell migration. The sequence is that of Ras-related protein Rab-17 from Homo sapiens (Human).